The chain runs to 141 residues: Cystatin-SN (141 aa).

The signal sequence occupies residues Met1–Ala20. Positions Gln76–Gly80 match the Secondary area of contact motif. 2 disulfides stabilise this stretch: Cys94-Cys104 and Cys118-Cys138.

Belongs to the cystatin family. In terms of tissue distribution, expressed in submandibular and sublingual saliva but not in parotid saliva (at protein level). Expressed in saliva, tears, urine and seminal fluid.

It is found in the secreted. Human saliva appears to contain several cysteine proteinase inhibitors that are immunologically related to cystatin S but that differ in their specificity due to amino acid sequence differences. Cystatin SN, with a pI of 7.5, is a much better inhibitor of papain and dipeptidyl peptidase I than is cystatin S, although both inhibit ficin equally well. This chain is Cystatin-SN (CST1), found in Homo sapiens (Human).